The primary structure comprises 174 residues: 2-hydroxy-palmitic acid dioxygenase MPO1 (174 aa).

Residues 1–23 (MGEGLLDLRSQLGFYKFYHHNPK) lie on the Cytoplasmic side of the membrane. The chain crosses the membrane as a helical span at residues 24-44 (NVLIHSIFVPTILFSGSCMLH). The Lumenal segment spans residues 45-63 (RVKIYQSISLTAVLSVLFS). Residues 64–84 (IFYCLLYLPTGLLAGVLLLLL) form a helical membrane-spanning segment. Residues 85 to 98 (NLALIDHRVDLTFK) lie on the Cytoplasmic side of the membrane. A helical transmembrane segment spans residues 99-119 (QELGLFTIGWIFQFVGHGVFE). The Lumenal portion of the chain corresponds to 120–131 (KRRPALIDNLVQ). The chain crosses the membrane as a helical span at residues 132–152 (SLVLAPYFIMFEFLFKLGFMP). The Cytoplasmic segment spans residues 153 to 174 (RLKATLEHDLEIKQRNLRMQRQ).

This sequence belongs to the MPO1 family. The cofactor is Fe(2+).

The protein localises to the endoplasmic reticulum membrane. It carries out the reaction (R)-2-hydroxyhexadecanoate + O2 = pentadecanoate + CO2 + H2O. In terms of biological role, dioxygenase that catalyzes the alpha-oxidation of 2-hydroxy fatty acids in an iron-dependent manner. Involved in metabolism of phytosphingosine and is required for proper endoplasmic reticulum stress response. In Saccharomyces cerevisiae (strain ATCC 204508 / S288c) (Baker's yeast), this protein is 2-hydroxy-palmitic acid dioxygenase MPO1.